The following is a 425-amino-acid chain: Aspyridones cluster regulator (425 aa).

Residues 100 to 127 constitute a DNA-binding region (zn(2)-C6 fungal-type); it reads CVDCRASKTRCTGEPEGCKRCTFRKRPC. The disordered stretch occupies residues 132-159; sequence LRRSNTTQHGEQIEASSSTFTMSDEQGS. Over residues 133–157 the composition is skewed to polar residues; that stretch reads RRSNTTQHGEQIEASSSTFTMSDEQ.

The protein localises to the nucleus. Functionally, transcription factor involved in regulation of gene cluster that mediates the biosynthesis of aphidicolin. In Neocamarosporium betae (Beet black rot fungus), this protein is Aspyridones cluster regulator (TF).